A 323-amino-acid chain; its full sequence is Glucokinase (323 aa).

Gly8–Thr13 contacts ATP.

Belongs to the bacterial glucokinase family.

It localises to the cytoplasm. The catalysed reaction is D-glucose + ATP = D-glucose 6-phosphate + ADP + H(+). The protein is Glucokinase of Yersinia pseudotuberculosis serotype I (strain IP32953).